The chain runs to 439 residues: Large ribosomal subunit protein mL44 (439 aa).

2 disordered regions span residues 39-73 (QSTAALAQHDASHDLNNDRFPPLEPLPPAAESLPS) and 247-282 (KAMEEQDQDKTPDEEEAEMVANEQDQDVSYDRYGNP). Over residues 247–257 (KAMEEQDQDKT) the composition is skewed to basic and acidic residues. The span at 258–274 (PDEEEAEMVANEQDQDV) shows a compositional bias: acidic residues.

Belongs to the ribonuclease III family. Mitochondrion-specific ribosomal protein mL44 subfamily. As to quaternary structure, component of the mitochondrial large ribosomal subunit (mt-LSU). Mature N.crassa 74S mitochondrial ribosomes consist of a small (37S) and a large (54S) subunit. The 37S small subunit contains a 16S ribosomal RNA (16S mt-rRNA) and 32 different proteins. The 54S large subunit contains a 23S rRNA (23S mt-rRNA) and 42 different proteins. mL44 forms a heterodimer with mL57 and stabilizes rRNA expansion segments 1/2 at a membrane-facing protuberance close to the point of attachment of the ribosome to the translocon in the membrane.

It localises to the mitochondrion. Its function is as follows. Component of the mitochondrial ribosome (mitoribosome), a dedicated translation machinery responsible for the synthesis of mitochondrial genome-encoded proteins, including at least some of the essential transmembrane subunits of the mitochondrial respiratory chain. The mitoribosomes are attached to the mitochondrial inner membrane and translation products are cotranslationally integrated into the membrane. In Neurospora crassa (strain ATCC 24698 / 74-OR23-1A / CBS 708.71 / DSM 1257 / FGSC 987), this protein is Large ribosomal subunit protein mL44 (mrpl3).